The following is a 673-amino-acid chain: eEF1A lysine and N-terminal methyltransferase homolog (673 aa).

This sequence belongs to the methyltransferase superfamily.

The catalysed reaction is L-lysyl-[protein] + S-adenosyl-L-methionine = N(6)-methyl-L-lysyl-[protein] + S-adenosyl-L-homocysteine + H(+). The enzyme catalyses N(6)-methyl-L-lysyl-[protein] + S-adenosyl-L-methionine = N(6),N(6)-dimethyl-L-lysyl-[protein] + S-adenosyl-L-homocysteine + H(+). It catalyses the reaction N-terminal glycyl-L-lysyl-L-glutamyl-[protein] + 3 S-adenosyl-L-methionine = N-terminal N,N,N-trimethyl-glycyl-L-lysyl-L-glutamyl-[protein] + 3 S-adenosyl-L-homocysteine + 3 H(+). In terms of biological role, dual methyltransferase. It catalyzes N-terminal methylation of target proteins via its C-terminus. It catalyzes dimethylation on lysine residues of target proteins via its N-terminus. This chain is eEF1A lysine and N-terminal methyltransferase homolog, found in Drosophila melanogaster (Fruit fly).